The following is a 207-amino-acid chain: Granulocyte colony-stimulating factor (207 aa).

An N-terminal signal peptide occupies residues 1–30 (MAGPATQSPMKLMALQLLLWHSALWTVQEA). Intrachain disulfides connect C69-C75 and C97-C107. A glycan (O-linked (GalNAc...) threonine) is linked at T166.

This sequence belongs to the IL-6 superfamily. In terms of assembly, monomer. In terms of processing, O-glycan consists of Gal-GalNAc disaccharide which can be modified with up to two sialic acid residues (done in recombinantly expressed G-CSF from CHO cells).

The protein resides in the secreted. Functionally, granulocyte/macrophage colony-stimulating factors are cytokines that act in hematopoiesis by controlling the production, differentiation, and function of 2 related white cell populations of the blood, the granulocytes and the monocytes-macrophages. This CSF induces granulocytes. The sequence is that of Granulocyte colony-stimulating factor (CSF3) from Homo sapiens (Human).